Reading from the N-terminus, the 328-residue chain is Malate dehydrogenase (328 aa).

11-17 (GAAGQIG) provides a ligand contact to NAD(+). Residues Arg-94 and Arg-100 each contribute to the substrate site. NAD(+) contacts are provided by residues Asn-107, Gln-114, and 131–133 (VGN). Positions 133 and 164 each coordinate substrate. The Proton acceptor role is filled by His-189.

The protein belongs to the LDH/MDH superfamily. MDH type 2 family.

It catalyses the reaction (S)-malate + NAD(+) = oxaloacetate + NADH + H(+). Functionally, catalyzes the reversible oxidation of malate to oxaloacetate. The sequence is that of Malate dehydrogenase from Xylella fastidiosa (strain Temecula1 / ATCC 700964).